Here is a 183-residue protein sequence, read N- to C-terminus: UPF0114 protein HI_0507 (183 aa).

Transmembrane regions (helical) follow at residues 30-50, 68-88, and 150-170; these read LQVPIYLGLIVTLAIYSYKFI, IMLGVLNLIDVVMIANLLVMV, and TMMWQLLLHLGFLVSAIALAY.

Belongs to the UPF0114 family.

Its subcellular location is the cell membrane. The protein is UPF0114 protein HI_0507 of Haemophilus influenzae (strain ATCC 51907 / DSM 11121 / KW20 / Rd).